Consider the following 151-residue polypeptide: Chaperonin GroEL (151 aa).

41-45 contributes to the ATP binding site; it reads DGTTT.

This sequence belongs to the chaperonin (HSP60) family. In terms of assembly, forms a cylinder of 14 subunits composed of two heptameric rings stacked back-to-back. Interacts with the co-chaperonin GroES.

The protein localises to the cytoplasm. The enzyme catalyses ATP + H2O + a folded polypeptide = ADP + phosphate + an unfolded polypeptide.. In terms of biological role, together with its co-chaperonin GroES, plays an essential role in assisting protein folding. The GroEL-GroES system forms a nano-cage that allows encapsulation of the non-native substrate proteins and provides a physical environment optimized to promote and accelerate protein folding. In Mycobacterium marinum, this protein is Chaperonin GroEL.